Consider the following 59-residue polypeptide: Small ribosomal subunit protein bS21 (59 aa).

The interval 34–59 (KHEHYEKPSVKRKKKSEAARRRKRSF) is disordered. Basic residues predominate over residues 43–59 (VKRKKKSEAARRRKRSF).

It belongs to the bacterial ribosomal protein bS21 family.

This is Small ribosomal subunit protein bS21 from Desulforudis audaxviator (strain MP104C).